A 122-amino-acid polypeptide reads, in one-letter code: Structural protein p14.5 (122 aa).

Disordered regions lie at residues M1–D27 and E73–K122. An N-acetylalanine; by host modification is found at A2. Positions K105–K122 are enriched in basic residues.

Belongs to the asfivirus structural protein p14.5 family. As to quaternary structure, interacts with the major capsid protein. Interacts with host IRF3; this interaction interferes with the recruitment of IRF3 to TBK1. Post-translationally, acetylated.

It localises to the virion. In terms of biological role, structural protein required for transport of intracellular particles from the assembly sites to the plasma membrane. Binds to both ssDNA and dsDNA. Suppressed the activation of the cGAS/STING pathway by interfering with the recruitment of IRF3 to TBK1, which in turn suppresses IRF3 phosphorylation, decreasing interferon production. The protein is Structural protein p14.5 of African swine fever virus (isolate Warthog/Namibia/Wart80/1980) (ASFV).